The sequence spans 137 residues: Large ribosomal subunit protein uL16c (137 aa).

Belongs to the universal ribosomal protein uL16 family. In terms of assembly, part of the 50S ribosomal subunit.

It localises to the plastid. The protein is Large ribosomal subunit protein uL16c of Cuscuta exaltata (Tall dodder).